The chain runs to 137 residues: ATP synthase epsilon chain (137 aa).

The protein belongs to the ATPase epsilon chain family. In terms of assembly, F-type ATPases have 2 components, CF(1) - the catalytic core - and CF(0) - the membrane proton channel. CF(1) has five subunits: alpha(3), beta(3), gamma(1), delta(1), epsilon(1). CF(0) has three main subunits: a, b and c.

It localises to the cell membrane. In terms of biological role, produces ATP from ADP in the presence of a proton gradient across the membrane. This is ATP synthase epsilon chain from Streptococcus agalactiae serotype Ia (strain ATCC 27591 / A909 / CDC SS700).